The sequence spans 305 residues: MLTFQQIILTLQKYWDAQGCALLQPYDMEVGAGTSHTATFLRAIGPEPWRAAYVQPSRRPKDGRYGENPNRLQHYYQYQVVLKPAPANILELYLGSLEALGFDLKANDIRFVEDDWENPTLGAWGLGWEVWLNGMEVTQFTYFQQVGGINCKPITGEITYGLERLAMYLQGVDNVYDLRWTDKLSYGDVYKQNEIEQSTYNFEHSDADFLFTAFGAHEKQALNLIDNKLALPAYEQVLKAAHTFNLLDARGAISVTERAAYIGRIRNLARSVARSYLDSRARLGFPMAKPEHAAEVLAQIEKEAA.

It belongs to the class-II aminoacyl-tRNA synthetase family. Tetramer of two alpha and two beta subunits.

The protein resides in the cytoplasm. The enzyme catalyses tRNA(Gly) + glycine + ATP = glycyl-tRNA(Gly) + AMP + diphosphate. This Janthinobacterium sp. (strain Marseille) (Minibacterium massiliensis) protein is Glycine--tRNA ligase alpha subunit.